Reading from the N-terminus, the 209-residue chain is Nucleoside triphosphate pyrophosphatase (209 aa).

Residue aspartate 79 is the Proton acceptor of the active site.

It belongs to the Maf family. The cofactor is a divalent metal cation.

Its subcellular location is the cytoplasm. The catalysed reaction is a ribonucleoside 5'-triphosphate + H2O = a ribonucleoside 5'-phosphate + diphosphate + H(+). It carries out the reaction a 2'-deoxyribonucleoside 5'-triphosphate + H2O = a 2'-deoxyribonucleoside 5'-phosphate + diphosphate + H(+). Nucleoside triphosphate pyrophosphatase. May have a dual role in cell division arrest and in preventing the incorporation of modified nucleotides into cellular nucleic acids. The protein is Nucleoside triphosphate pyrophosphatase of Mycolicibacterium vanbaalenii (strain DSM 7251 / JCM 13017 / BCRC 16820 / KCTC 9966 / NRRL B-24157 / PYR-1) (Mycobacterium vanbaalenii).